Reading from the N-terminus, the 508-residue chain is Protection of telomeres protein tpz1 (508 aa).

The segment at 2–223 (SNCLKHPWLE…ENTTHGIYLE (222 aa)) is pot1-binding. Disordered regions lie at residues 159–178 (QEAS…NSRD), 235–269 (VSET…PSLP), and 282–358 (PPPF…QSHR). Positions 327-347 (STEQLNSSLTIERSQSIQSTD) are enriched in polar residues. Positions 348 to 358 (SKQRVETQSHR) are enriched in basic and acidic residues. The segment at 379-508 (TIDDSTGKLL…KKIEEFRNKS (130 aa)) is ccq1/poz1-binding.

Interacts with ccq1, pot1 and poz1.

Its subcellular location is the chromosome. It localises to the telomere. The protein resides in the nucleus. Telomeric DNA-binding protein that is required to protect the 3'-end telomeric overhang and involved in telomere length regulation. recruits poz1 and ccq1 to telomeres, regulating telomere length negatively and positively respectively. This chain is Protection of telomeres protein tpz1 (tpz1), found in Schizosaccharomyces pombe (strain 972 / ATCC 24843) (Fission yeast).